We begin with the raw amino-acid sequence, 243 residues long: Zinc import ATP-binding protein ZnuC (243 aa).

The region spanning 25–242 (LVVDSITLFY…AKFMSVFPEN (218 aa)) is the ABC transporter domain. ATP is bound at residue 57–64 (GPNGGGKT).

This sequence belongs to the ABC transporter superfamily. Zinc importer (TC 3.A.1.15.5) family. In terms of assembly, the complex is composed of two ATP-binding proteins (ZnuC), two transmembrane proteins (ZnuB) and a solute-binding protein (ZnuA).

It is found in the cell inner membrane. The enzyme catalyses Zn(2+)(out) + ATP(in) + H2O(in) = Zn(2+)(in) + ADP(in) + phosphate(in) + H(+)(in). Part of the ABC transporter complex ZnuABC involved in zinc import. Responsible for energy coupling to the transport system. The protein is Zinc import ATP-binding protein ZnuC of Anaplasma phagocytophilum (strain HZ).